The primary structure comprises 154 residues: Nuclear cap-binding protein subunit 2 (154 aa).

MRNA contacts are provided by residues Tyr10, Tyr33, 102-106 (RVDWD), 113-117 (RQYGR), and 123-124 (QV). The RRM domain maps to 30 to 108 (CTLYVGNLSF…RLIRVDWDAG (79 aa)).

It belongs to the RRM NCBP2 family. In terms of assembly, component of the nuclear cap-binding complex (CBC), a heterodimer composed of Cbp80 and Cbp20 that interacts with m7GpppG-capped RNA. Interacts with Ars2.

The protein resides in the nucleus. In terms of biological role, component of the cap-binding complex (CBC), which binds co-transcriptionally to the 5' cap of pre-mRNAs and is involved in various processes such as pre-mRNA splicing and RNA-mediated gene silencing (RNAi). The CBC complex is involved in miRNA-mediated RNA interference via its interaction with Ars2 and is required for primary microRNAs (miRNAs) processing. Also involved in innate immunity via the short interfering RNAs (siRNAs) processing machinery by restricting the viral RNA production. In the CBC complex, Cbp20 recognizes and binds capped RNAs (m7GpppG-capped RNA) but requires Cbp80 to stabilize the movement of its N-terminal loop and lock the CBC into a high affinity cap-binding state with the cap structure. The protein is Nuclear cap-binding protein subunit 2 (Cbp20) of Drosophila willistoni (Fruit fly).